Consider the following 323-residue polypeptide: Acetyl-coenzyme A carboxylase carboxyl transferase subunit alpha (323 aa).

Residues Arg39–Gln293 enclose the CoA carboxyltransferase C-terminal domain.

This sequence belongs to the AccA family. Acetyl-CoA carboxylase is a heterohexamer composed of biotin carboxyl carrier protein (AccB), biotin carboxylase (AccC) and two subunits each of ACCase subunit alpha (AccA) and ACCase subunit beta (AccD).

The protein resides in the cytoplasm. It carries out the reaction N(6)-carboxybiotinyl-L-lysyl-[protein] + acetyl-CoA = N(6)-biotinyl-L-lysyl-[protein] + malonyl-CoA. It participates in lipid metabolism; malonyl-CoA biosynthesis; malonyl-CoA from acetyl-CoA: step 1/1. Component of the acetyl coenzyme A carboxylase (ACC) complex. First, biotin carboxylase catalyzes the carboxylation of biotin on its carrier protein (BCCP) and then the CO(2) group is transferred by the carboxyltransferase to acetyl-CoA to form malonyl-CoA. The chain is Acetyl-coenzyme A carboxylase carboxyl transferase subunit alpha from Paraburkholderia phymatum (strain DSM 17167 / CIP 108236 / LMG 21445 / STM815) (Burkholderia phymatum).